Reading from the N-terminus, the 499-residue chain is Protein NODULATION SIGNALING PATHWAY 2 (499 aa).

A disordered region spans residues 64 to 106 (NNTGPAFSDHTASTTSEEEEEEEATTTTMTTTTTTTTTTPEAA). Positions 88-104 (TTTTMTTTTTTTTTTPE) are enriched in low complexity. The region spanning 106-491 (ADDDFKGLRL…RRLLSASLWT (386 aa)) is the GRAS domain. The interval 113-182 (LRLVHLLMAG…AGGAYNSSSK (70 aa)) is leucine repeat I (LRI). Residues 201-265 (FQLLQDMSPY…PNGPHLRITA (65 aa)) are VHIID. Positions 232 to 236 (VHIVD) match the VHIID motif. Residues 281 to 313 (ETGRRLTAFATSLGQPFSFHHSRLESDETFRPA) form a leucine repeat II (LRII) region. Residues 323-414 (LVFNCMLNLP…RVFLGPRIVG (92 aa)) form a PFYRE region. The segment at 417–491 (ARIYRTGGGG…RRLLSASLWT (75 aa)) is SAW.

It belongs to the GRAS family. Interacts with IPN2. Binds to RAD1. Interacts with RAM1. Highly expressed in roots.

Its subcellular location is the nucleus membrane. The protein resides in the endoplasmic reticulum. Transcriptional regulator essential for Nod-factor-induced gene expression. Acts downstream of calcium spiking and a calcium/calmodulin-dependent protein kinase required for activation of early nodulation gene expression. Transcription factor involved in the induction of NIN and ENOD40 genes, which are required for rhizobial infection and early nodule development. Does not seem to contribute to the early steps of the arbuscular mycorrhizal fungus infection and colonization processes in roots. Transcription factor involved in the positive regulation of the beta-carotene isomerase D27, which participates in a pathway leading to biosynthesis of strigolactones in roots. In Lotus japonicus (Lotus corniculatus var. japonicus), this protein is Protein NODULATION SIGNALING PATHWAY 2.